We begin with the raw amino-acid sequence, 88 residues long: Small ribosomal subunit protein bS20 (88 aa).

The disordered stretch occupies residues 1–22; sequence MANTPSAKKAVNKIAKRTQVNK.

Belongs to the bacterial ribosomal protein bS20 family.

In terms of biological role, binds directly to 16S ribosomal RNA. This is Small ribosomal subunit protein bS20 from Bartonella bacilliformis (strain ATCC 35685 / KC583 / Herrer 020/F12,63).